A 251-amino-acid chain; its full sequence is Triosephosphate isomerase (251 aa).

Residue 9–11 coordinates substrate; sequence NWK. His95 serves as the catalytic Electrophile. The active-site Proton acceptor is the Glu167. Substrate is bound by residues Gly173, Ser213, and 234–235; that span reads GG.

Belongs to the triosephosphate isomerase family. As to quaternary structure, homodimer.

It is found in the cytoplasm. It catalyses the reaction D-glyceraldehyde 3-phosphate = dihydroxyacetone phosphate. It participates in carbohydrate biosynthesis; gluconeogenesis. The protein operates within carbohydrate degradation; glycolysis; D-glyceraldehyde 3-phosphate from glycerone phosphate: step 1/1. Its function is as follows. Involved in the gluconeogenesis. Catalyzes stereospecifically the conversion of dihydroxyacetone phosphate (DHAP) to D-glyceraldehyde-3-phosphate (G3P). The sequence is that of Triosephosphate isomerase from Pelobacter propionicus (strain DSM 2379 / NBRC 103807 / OttBd1).